A 145-amino-acid polypeptide reads, in one-letter code: I-leader protein (145 aa).

The protein resides in the host cytoplasm. It is found in the host perinuclear region. This is I-leader protein from Human adenovirus C serotype 2 (HAdV-2).